The following is a 255-amino-acid chain: Small ribosomal subunit protein uS2 (255 aa).

This sequence belongs to the universal ribosomal protein uS2 family.

This is Small ribosomal subunit protein uS2 from Streptococcus thermophilus (strain CNRZ 1066).